Reading from the N-terminus, the 292-residue chain is Ribosomal protein L11 methyltransferase (292 aa).

S-adenosyl-L-methionine contacts are provided by threonine 136, glycine 159, aspartate 181, and asparagine 228.

This sequence belongs to the methyltransferase superfamily. PrmA family.

Its subcellular location is the cytoplasm. It carries out the reaction L-lysyl-[protein] + 3 S-adenosyl-L-methionine = N(6),N(6),N(6)-trimethyl-L-lysyl-[protein] + 3 S-adenosyl-L-homocysteine + 3 H(+). In terms of biological role, methylates ribosomal protein L11. The sequence is that of Ribosomal protein L11 methyltransferase from Rhizobium etli (strain CIAT 652).